A 208-amino-acid polypeptide reads, in one-letter code: MSGCGPWLPHDLLWGMTPAQLPGDAPAWAHAVLEAGQPVVVRRALTAPGQVAVGLRGVSREQRYPALLDLQAVQRGVRPEQLCHVPPQGPWPALQALQHLRDELDAQEWIWGVSGSAGFELASGVAALHQHSDLDLILRTPELLPRARARELLALLDGAGCPVDMQLQVPGGALALREWAGPAARVLLKSASGARLVSDPWNPQEQAA.

Catalysis depends on residues Asp133 and Asp135.

Belongs to the MdcG family.

It carries out the reaction apo-[malonate decarboxylase ACP] + 2'-(5''-triphospho-alpha-D-ribosyl)-3'-dephospho-CoA = holo-[malonate decarboxylase ACP] + diphosphate. Functionally, transfers 2'-(5-triphosphoribosyl)-3'-dephosphocoenzyme-A to the apo-[acyl-carrier-protein] of the malonate decarboxylase to yield holo-[acyl-carrier-protein]. In Pseudomonas fluorescens (strain ATCC BAA-477 / NRRL B-23932 / Pf-5), this protein is Phosphoribosyl-dephospho-CoA transferase.